Consider the following 545-residue polypeptide: Sulfite oxidase, mitochondrial (545 aa).

The transit peptide at 1–79 (MLLLHRAVVL…YQDHRCRAAQ (79 aa)) directs the protein to the mitochondrion. The Cytochrome b5 heme-binding domain maps to 82–161 (THIYTKEEVS…LAQYKIGELN (80 aa)). Histidine 118 contacts heme b. At serine 123 the chain carries Phosphoserine. The heme b site is built by histidine 143, glutamine 145, and histidine 147. A hinge region spans residues 165 to 174 (KVAPTVETSD). The interval 175 to 401 (PYADDPVRHP…YSHWQRRDYK (227 aa)) is moco domain. Residues 215–219 (FTRNH), cysteine 264, aspartate 322, histidine 361, arginine 366, and 377–379 (HVK) each bind Mo-molybdopterin. Residues 402 to 538 (GFSPSVDWET…RGVLSNAWHR (137 aa)) are homodimerization.

Homodimer. Requires heme b as cofactor. The cofactor is Mo-molybdopterin.

Its subcellular location is the mitochondrion intermembrane space. The enzyme catalyses sulfite + O2 + H2O = sulfate + H2O2. It participates in energy metabolism; sulfur metabolism. Functionally, catalyzes the oxidation of sulfite to sulfate, the terminal reaction in the oxidative degradation of sulfur-containing amino acids. The sequence is that of Sulfite oxidase, mitochondrial (SUOX) from Homo sapiens (Human).